A 378-amino-acid polypeptide reads, in one-letter code: Protein RecA (378 aa).

Residue 79–86 (GPESSGKT) participates in ATP binding.

This sequence belongs to the RecA family.

Its subcellular location is the cytoplasm. Can catalyze the hydrolysis of ATP in the presence of single-stranded DNA, the ATP-dependent uptake of single-stranded DNA by duplex DNA, and the ATP-dependent hybridization of homologous single-stranded DNAs. It interacts with LexA causing its activation and leading to its autocatalytic cleavage. The protein is Protein RecA of Streptococcus pyogenes serotype M49 (strain NZ131).